The following is a 54-amino-acid chain: MAVQKNKPTRSKRGMRRSHDSLTAPHLSIDKFSGETHIRHHITNNGYYKGKKVI.

Positions 1–26 (MAVQKNKPTRSKRGMRRSHDSLTAPH) are disordered. Residues 7–16 (KPTRSKRGMR) show a composition bias toward basic residues.

This sequence belongs to the bacterial ribosomal protein bL32 family.

In Buchnera aphidicola subsp. Acyrthosiphon pisum (strain 5A), this protein is Large ribosomal subunit protein bL32.